The sequence spans 206 residues: CASP-like protein 1F1 (206 aa).

At 1–43 (MCFQFSILYTCYLAHFGVFPRKYLVMAGIEAKFQQNPPLGTHK) the chain is on the cytoplasmic side. A helical transmembrane segment spans residues 44–64 (LFLGAHICLRILTVTATLTAA). At 65-92 (WMMITSKQTVEVYGIQVEAKYSYSSAFK) the chain is on the extracellular side. A helical transmembrane segment spans residues 93–113 (FFSYANAIACGCSVLTLFPAF). Residues 114–124 (SLFYRGSTPMK) lie on the Cytoplasmic side of the membrane. Residues 125–145 (FFFLFLHDLCMMSLVLAGCAA) form a helical membrane-spanning segment. Residues 146 to 177 (ATAIGYVGRYGNNHAGWMAICDQFDEYCNRIR) are Extracellular-facing. A helical transmembrane segment spans residues 178–198 (LSLMFSYLAFVFILMLTIMSA). At 199-206 (NKSREIRV) the chain is on the cytoplasmic side.

The protein belongs to the Casparian strip membrane proteins (CASP) family. In terms of assembly, homodimer and heterodimers.

The protein resides in the cell membrane. The sequence is that of CASP-like protein 1F1 from Vitis vinifera (Grape).